The sequence spans 341 residues: Glyceraldehyde-3-phosphate dehydrogenase 2 (341 aa).

NAD(+) is bound by residues 12 to 13, Arg78, and Thr120; that span reads RI. D-glyceraldehyde 3-phosphate contacts are provided by residues 152-154 and Thr183; that span reads SCT. The Nucleophile role is filled by Cys153. Asn184 contacts NAD(+). Residues Arg198, 211–212, and Arg234 contribute to the D-glyceraldehyde 3-phosphate site; that span reads TG. Asn313 contacts NAD(+).

It belongs to the glyceraldehyde-3-phosphate dehydrogenase family. Homotetramer.

It localises to the cytoplasm. It carries out the reaction D-glyceraldehyde 3-phosphate + phosphate + NAD(+) = (2R)-3-phospho-glyceroyl phosphate + NADH + H(+). It participates in carbohydrate degradation; glycolysis; pyruvate from D-glyceraldehyde 3-phosphate: step 1/5. Its function is as follows. Catalyzes the oxidative phosphorylation of glyceraldehyde 3-phosphate (G3P) to 1,3-bisphosphoglycerate (BPG) using the cofactor NAD. The first reaction step involves the formation of a hemiacetal intermediate between G3P and a cysteine residue, and this hemiacetal intermediate is then oxidized to a thioester, with concomitant reduction of NAD to NADH. The reduced NADH is then exchanged with the second NAD, and the thioester is attacked by a nucleophilic inorganic phosphate to produce BPG. This is Glyceraldehyde-3-phosphate dehydrogenase 2 (gapA2) from Staphylococcus epidermidis (strain ATCC 12228 / FDA PCI 1200).